Here is a 650-residue protein sequence, read N- to C-terminus: 1-deoxy-D-xylulose-5-phosphate synthase (650 aa).

Thiamine diphosphate contacts are provided by residues His73 and Ser114–Ala116. Asp145 is a binding site for Mg(2+). Thiamine diphosphate-binding positions include Gly146 to Ala147, Asn174, Tyr285, and Glu367. Position 174 (Asn174) interacts with Mg(2+). The disordered stretch occupies residues Met631–Ala650.

This sequence belongs to the transketolase family. DXPS subfamily. In terms of assembly, homodimer. Requires Mg(2+) as cofactor. Thiamine diphosphate is required as a cofactor.

It carries out the reaction D-glyceraldehyde 3-phosphate + pyruvate + H(+) = 1-deoxy-D-xylulose 5-phosphate + CO2. The protein operates within metabolic intermediate biosynthesis; 1-deoxy-D-xylulose 5-phosphate biosynthesis; 1-deoxy-D-xylulose 5-phosphate from D-glyceraldehyde 3-phosphate and pyruvate: step 1/1. In terms of biological role, catalyzes the acyloin condensation reaction between C atoms 2 and 3 of pyruvate and glyceraldehyde 3-phosphate to yield 1-deoxy-D-xylulose-5-phosphate (DXP). The sequence is that of 1-deoxy-D-xylulose-5-phosphate synthase from Parafrankia sp. (strain EAN1pec).